Here is a 361-residue protein sequence, read N- to C-terminus: Caffeic acid 3-O-methyltransferase 1 (361 aa).

Residue 128-134 (MNQDKVL) participates in substrate binding. Residues 160–178 (AFEYHGTDPRFNKVFNQGM) are substrate binding. The S-adenosyl-L-methionine site is built by Gly-206, Asp-229, Asp-249, Met-250, and Lys-263. Residue His-267 is the Proton acceptor of the active site.

Belongs to the class I-like SAM-binding methyltransferase superfamily. Cation-independent O-methyltransferase family. COMT subfamily. As to quaternary structure, homodimer.

The catalysed reaction is (E)-caffeate + S-adenosyl-L-methionine = (E)-ferulate + S-adenosyl-L-homocysteine + H(+). The protein operates within aromatic compound metabolism; phenylpropanoid biosynthesis. Functionally, catalyzes the conversion of caffeic acid to ferulic acid and of 5-hydroxyferulic acid to sinapic acid. The resulting products may subsequently be converted to the corresponding alcohols that are incorporated into lignins. In Ocimum basilicum (Sweet basil), this protein is Caffeic acid 3-O-methyltransferase 1 (COMT1).